The following is a 159-amino-acid chain: Transcription elongation factor GreA (159 aa).

It belongs to the GreA/GreB family.

Its function is as follows. Necessary for efficient RNA polymerase transcription elongation past template-encoded arresting sites. The arresting sites in DNA have the property of trapping a certain fraction of elongating RNA polymerases that pass through, resulting in locked ternary complexes. Cleavage of the nascent transcript by cleavage factors such as GreA or GreB allows the resumption of elongation from the new 3'terminus. GreA releases sequences of 2 to 3 nucleotides. The sequence is that of Transcription elongation factor GreA from Orientia tsutsugamushi (strain Boryong) (Rickettsia tsutsugamushi).